The chain runs to 210 residues: Large ribosomal subunit protein bL25 (210 aa).

The protein belongs to the bacterial ribosomal protein bL25 family. CTC subfamily. Part of the 50S ribosomal subunit; part of the 5S rRNA/L5/L18/L25 subcomplex. Contacts the 5S rRNA. Binds to the 5S rRNA independently of L5 and L18.

In terms of biological role, this is one of the proteins that binds to the 5S RNA in the ribosome where it forms part of the central protuberance. In Saccharophagus degradans (strain 2-40 / ATCC 43961 / DSM 17024), this protein is Large ribosomal subunit protein bL25.